The following is a 192-amino-acid chain: Xanthine phosphoribosyltransferase (192 aa).

The xanthine site is built by Leu20 and Asn27. A 5-phospho-alpha-D-ribose 1-diphosphate-binding site is contributed by 128-132 (ANGQA). Lys156 provides a ligand contact to xanthine.

This sequence belongs to the purine/pyrimidine phosphoribosyltransferase family. Xpt subfamily. As to quaternary structure, homodimer.

The protein localises to the cytoplasm. The catalysed reaction is XMP + diphosphate = xanthine + 5-phospho-alpha-D-ribose 1-diphosphate. It participates in purine metabolism; XMP biosynthesis via salvage pathway; XMP from xanthine: step 1/1. Converts the preformed base xanthine, a product of nucleic acid breakdown, to xanthosine 5'-monophosphate (XMP), so it can be reused for RNA or DNA synthesis. This Listeria monocytogenes serotype 4b (strain F2365) protein is Xanthine phosphoribosyltransferase.